A 280-amino-acid polypeptide reads, in one-letter code: 4-deoxy-L-threo-5-hexosulose-uronate ketol-isomerase (280 aa).

Residues His-198, His-200, Glu-205, and His-247 each coordinate Zn(2+).

It belongs to the KduI family. It depends on Zn(2+) as a cofactor.

The catalysed reaction is 5-dehydro-4-deoxy-D-glucuronate = 3-deoxy-D-glycero-2,5-hexodiulosonate. Its pathway is glycan metabolism; pectin degradation; 2-dehydro-3-deoxy-D-gluconate from pectin: step 4/5. Catalyzes the isomerization of 5-dehydro-4-deoxy-D-glucuronate to 3-deoxy-D-glycero-2,5-hexodiulosonate. In Lachnospira eligens (strain ATCC 27750 / DSM 3376 / VPI C15-48 / C15-B4) (Eubacterium eligens), this protein is 4-deoxy-L-threo-5-hexosulose-uronate ketol-isomerase.